Consider the following 444-residue polypeptide: Phosphoglucosamine mutase (444 aa).

Residue Ser-102 is the Phosphoserine intermediate of the active site. Ser-102, Asp-241, Asp-243, and Asp-245 together coordinate Mg(2+). Ser-102 is modified (phosphoserine).

This sequence belongs to the phosphohexose mutase family. Mg(2+) is required as a cofactor. Post-translationally, activated by phosphorylation.

The catalysed reaction is alpha-D-glucosamine 1-phosphate = D-glucosamine 6-phosphate. Catalyzes the conversion of glucosamine-6-phosphate to glucosamine-1-phosphate. The sequence is that of Phosphoglucosamine mutase from Glaesserella parasuis serovar 5 (strain SH0165) (Haemophilus parasuis).